The sequence spans 296 residues: Biliverdin reductase A (296 aa).

The propeptide occupies 1-2 (MN). NADP(+)-binding positions include 16–19 (VGRA), 44–46 (SRR), 77–80 (SSSH), and tyrosine 98. Position 174 is a phosphothreonine (threonine 174). Serine 178 and serine 230 each carry phosphoserine. 2 positions are modified to N6-acetyllysine: lysine 248 and lysine 253. Zn(2+)-binding residues include histidine 280, cysteine 281, cysteine 292, and cysteine 293.

It belongs to the Gfo/Idh/MocA family. Biliverdin reductase subfamily. In terms of assembly, monomer. Zn(2+) is required as a cofactor. In terms of tissue distribution, liver.

Its subcellular location is the cytoplasm. It localises to the cytosol. It carries out the reaction (4Z,15Z)-bilirubin IXalpha + NAD(+) = biliverdin IXalpha + NADH + H(+). The catalysed reaction is (4Z,15Z)-bilirubin IXalpha + NADP(+) = biliverdin IXalpha + NADPH + H(+). It functions in the pathway porphyrin-containing compound metabolism; protoheme degradation. Functionally, reduces the gamma-methene bridge of the open tetrapyrrole, biliverdin IXalpha, to bilirubin with the concomitant oxidation of a NADH or NADPH cofactor. Does not reduce bilirubin IXbeta. Uses the reactants NADH or NADPH depending on the pH; NADH is used at the acidic pH range (6-6.9) and NADPH at the alkaline range (8.5-8.7). NADPH, however, is the probable reactant in biological systems. This is Biliverdin reductase A from Homo sapiens (Human).